The sequence spans 428 residues: Lysophosphatidic acid phosphatase type 6 (428 aa).

Residues 1-32 (MITGVFSMRLWTPVGVLTSLAYCLHQRRVALA) constitute a mitochondrion transit peptide. The tract at residues 58–168 (RHGARSPLKP…VFIRSTNIFR (111 aa)) is substrate binding. The Nucleophile role is filled by His-59. Asp-335 acts as the Proton donor in catalysis.

It belongs to the histidine acid phosphatase family. Monomer. Highly expressed in kidney, heart, small intestine, muscle, liver, prostate, testis, ovary and weakly expressed in thymus and colon.

It localises to the mitochondrion. The catalysed reaction is a phosphate monoester + H2O = an alcohol + phosphate. The enzyme catalyses 1-(9Z-octadecenoyl)-sn-glycero-3-phosphate + H2O = 1-(9Z-octadecenoyl)-sn-glycerol + phosphate. Its function is as follows. Hydrolyzes lysophosphatidic acid (LPA) containing a medium length fatty acid chain to the corresponding monoacylglycerol. Has highest activity with lysophosphatidic acid containing myristate (C14:0), monounsaturated oleate (C18:1) or palmitate (C16:0), and lower activity with C18:0 and C6:0 lysophosphatidic acid. The chain is Lysophosphatidic acid phosphatase type 6 (ACP6) from Homo sapiens (Human).